A 229-amino-acid polypeptide reads, in one-letter code: Large ribosomal RNA subunit accumulation protein YCED homolog 2, chloroplastic (229 aa).

A chloroplast-targeting transit peptide spans 1 to 42; sequence MDVRCLISPNLLNSKIKVSGNTHHLPFSSLSKKHQASSPIQA.

The protein belongs to the DUF177 domain family.

The protein localises to the plastid. It is found in the chloroplast. Functionally, may play a role in synthesis, processing and/or stability of 23S rRNA. The protein is Large ribosomal RNA subunit accumulation protein YCED homolog 2, chloroplastic of Arabidopsis thaliana (Mouse-ear cress).